The primary structure comprises 218 residues: 7-cyano-7-deazaguanine synthase (218 aa).

Residue 9–19 (YSGGMDSFTVL) participates in ATP binding. Zn(2+) contacts are provided by Cys185, Cys193, Cys196, and Cys199.

The protein belongs to the QueC family. Zn(2+) is required as a cofactor.

The catalysed reaction is 7-carboxy-7-deazaguanine + NH4(+) + ATP = 7-cyano-7-deazaguanine + ADP + phosphate + H2O + H(+). The protein operates within purine metabolism; 7-cyano-7-deazaguanine biosynthesis. Its function is as follows. Catalyzes the ATP-dependent conversion of 7-carboxy-7-deazaguanine (CDG) to 7-cyano-7-deazaguanine (preQ(0)). This Pseudoalteromonas translucida (strain TAC 125) protein is 7-cyano-7-deazaguanine synthase.